A 119-amino-acid polypeptide reads, in one-letter code: Toxin ICK-8 (119 aa).

The N-terminal stretch at 1–19 (MMKLYSLVIIATLAAAAFA) is a signal peptide. Intrachain disulfides connect cysteine 59/cysteine 74, cysteine 67/cysteine 80, cysteine 71/cysteine 116, and cysteine 73/cysteine 87.

This sequence belongs to the neurotoxin 25 family. ICK-8 subfamily. Expressed by the venom gland.

Its subcellular location is the secreted. Ion channel inhibitor. This chain is Toxin ICK-8, found in Trittame loki (Brush-footed trapdoor spider).